A 188-amino-acid polypeptide reads, in one-letter code: MLGNFRFDDMVEKLSRRVAGQTSRRSVIGKLGTAMLGIGLVPLLPVDRRGRVSRANAADAPAGTDPRAKWVPQDNDIQACDYWRHCSIDGNICDCSGGSLTNCPPGTKLATASWVASCYNPTDGQSYLIAYRDCCGYNVSGRCPCLNTEGELPVYRPEFANDIIWCFGAEDDAMTYHCTISPIVGKAS.

Positions 1-57 (MLGNFRFDDMVEKLSRRVAGQTSRRSVIGKLGTAMLGIGLVPLLPVDRRGRVSRANA) form a signal peptide, tat-type signal. Cystine bridges form between cysteine 80–cysteine 145, cysteine 86–cysteine 118, cysteine 93–cysteine 178, cysteine 95–cysteine 143, cysteine 103–cysteine 134, and cysteine 135–cysteine 166. Tryptophylquinone is present on tryptophan 114. Residues 114 to 165 (WVASCYNPTDGQSYLIAYRDCCGYNVSGRCPCLNTEGELPVYRPEFANDIIW) constitute a cross-link (tryptophan tryptophylquinone (Trp-Trp)).

This sequence belongs to the aromatic amine dehydrogenase light chain family. Heterotetramer of two light and two heavy chains. Requires tryptophan tryptophylquinone residue as cofactor. Predicted to be exported by the Tat system. The position of the signal peptide cleavage has not been experimentally proven. In terms of processing, tryptophan tryptophylquinone (TTQ) is formed by oxidation of the indole ring of a tryptophan to form tryptophylquinone followed by covalent cross-linking with another tryptophan residue.

Its subcellular location is the periplasm. The enzyme catalyses 2 oxidized [amicyanin] + methylamine + H2O = 2 reduced [amicyanin] + formaldehyde + NH4(+) + 2 H(+). It participates in one-carbon metabolism; methylamine degradation; formaldehyde from methylamine: step 1/1. Functionally, methylamine dehydrogenase carries out the oxidation of methylamine. Electrons are passed from methylamine dehydrogenase to amicyanin. This is Methylamine dehydrogenase light chain (mauA) from Paracoccus denitrificans.